A 311-amino-acid polypeptide reads, in one-letter code: Dehydrogenase/reductase SDR family member 7C (311 aa).

An N-terminal signal peptide occupies residues Met1 to Gly18. NAD(+) is bound by residues Ser47, Leu49, Tyr191, Lys195, and Ser226. Tyr191 acts as the Proton acceptor in catalysis.

It belongs to the short-chain dehydrogenases/reductases (SDR) family.

The protein resides in the sarcoplasmic reticulum membrane. It catalyses the reaction all-trans-retinol + NAD(+) = all-trans-retinal + NADH + H(+). Functionally, NADH-dependent oxidoreductase which catalyzes the oxidation of all-trans-retinol to all-trans-retinal. Plays a role in the regulation of cardiac and skeletal muscle metabolic functions. Maintains Ca(2+) intracellular homeostasis by repressing Ca(2+) release from the sarcoplasmic reticulum (SR) in myotubes, possibly through local alternations in NAD/NADH or retinol/retinal. Also plays a role in Ca(2+) homeostasis by controlling Ca(2+) overload in the cytosol and the SR in myotubes. Involved in glucose uptake into skeletal muscles and muscle performance by activating PI3K and mTORC2-mediated AKT1 phosphorylation signaling pathways, possibly through the action of its downstream catalytic product all-trans-retinoic acid. This chain is Dehydrogenase/reductase SDR family member 7C (DHRS7C), found in Bos taurus (Bovine).